A 134-amino-acid chain; its full sequence is Large ribosomal subunit protein bL20 (134 aa).

Belongs to the bacterial ribosomal protein bL20 family.

Functionally, binds directly to 23S ribosomal RNA and is necessary for the in vitro assembly process of the 50S ribosomal subunit. It is not involved in the protein synthesizing functions of that subunit. This chain is Large ribosomal subunit protein bL20, found in Allorhizobium ampelinum (strain ATCC BAA-846 / DSM 112012 / S4) (Agrobacterium vitis (strain S4)).